The following is a 462-amino-acid chain: Integrator complex subunit 12 (462 aa).

Residues 42 to 132 (GIDSSYRPSQ…PETQSSPITV (91 aa)) are disordered. The span at 59 to 86 (ISSTKNISIKQEPKISSSLPSGNNNGKV) shows a compositional bias: polar residues. A Glycyl lysine isopeptide (Lys-Gly) (interchain with G-Cter in SUMO2) cross-link involves residue Lys68. Basic and acidic residues predominate over residues 88-124 (TTEKVKKEAEKRPADKMKSDITEGVDIPKKPRLEKPE). Residue Ser128 is modified to Phosphoserine. The segment at 159–215 (GLACVVCRQMMVASGNQLVECQECHNLYHRDCHKPQVTDKEANDPRLVWYCARCTRQ) adopts a PHD-type zinc-finger fold. Lys254 is covalently cross-linked (Glycyl lysine isopeptide (Lys-Gly) (interchain with G-Cter in SUMO2)). Positions 301 to 328 (SSAGPSTAKLSSTTQNNTGKPATSSANQ) are enriched in polar residues. The tract at residues 301-462 (SSAGPSTAKL…KKAAQKKLKK (162 aa)) is disordered. 2 stretches are compositionally biased toward low complexity: residues 347–358 (KIGSNNSTTPTV) and 382–437 (VSKV…GPTS). Positions 449–462 (QMVKKKAAQKKLKK) are enriched in basic residues.

The protein belongs to the Integrator subunit 12 family. Component of the Integrator complex, composed of core subunits INTS1, INTS2, INTS3, INTS4, INTS5, INTS6, INTS7, INTS8, INTS9/RC74, INTS10, INTS11/CPSF3L, INTS12, INTS13, INTS14 and INTS15. The core complex associates with protein phosphatase 2A subunits PPP2CA and PPP2R1A, to form the Integrator-PP2A (INTAC) complex. In terms of processing, dephosphorylated at Ser-128 by the PNUTS-PP1 complex, promoting RNA polymerase II transcription pause-release.

It localises to the nucleus. Its function is as follows. Component of the integrator complex, a multiprotein complex that terminates RNA polymerase II (Pol II) transcription in the promoter-proximal region of genes. The integrator complex provides a quality checkpoint during transcription elongation by driving premature transcription termination of transcripts that are unfavorably configured for transcriptional elongation: the complex terminates transcription by (1) catalyzing dephosphorylation of the C-terminal domain (CTD) of Pol II subunit POLR2A/RPB1 and SUPT5H/SPT5, (2) degrading the exiting nascent RNA transcript via endonuclease activity and (3) promoting the release of Pol II from bound DNA. The integrator complex is also involved in terminating the synthesis of non-coding Pol II transcripts, such as enhancer RNAs (eRNAs), small nuclear RNAs (snRNAs), telomerase RNAs and long non-coding RNAs (lncRNAs). Mediates recruitment of cytoplasmic dynein to the nuclear envelope, probably as component of the integrator complex. The protein is Integrator complex subunit 12 of Homo sapiens (Human).